We begin with the raw amino-acid sequence, 77 residues long: Protein RALF-like 17 (77 aa).

An N-terminal signal peptide occupies residues 1–29 (MAASREFIICCFLTLLLCNFFMRVESGAA). A disulfide bond links cysteine 37 and cysteine 51.

The protein belongs to the plant rapid alkalinization factor (RALF) family.

It localises to the secreted. Its function is as follows. Cell signaling peptide that may regulate plant stress, growth, and development. Mediates a rapid alkalinization of extracellular space by mediating a transient increase in the cytoplasmic Ca(2+) concentration leading to a calcium-dependent signaling events through a cell surface receptor and a concomitant activation of some intracellular mitogen-activated protein kinases. This chain is Protein RALF-like 17 (RALFL17), found in Arabidopsis thaliana (Mouse-ear cress).